Here is a 158-residue protein sequence, read N- to C-terminus: Large ribosomal subunit protein uL16 (158 aa).

This sequence belongs to the universal ribosomal protein uL16 family. As to quaternary structure, part of the 50S ribosomal subunit.

Binds 23S rRNA and is also seen to make contacts with the A and possibly P site tRNAs. The protein is Large ribosomal subunit protein uL16 of Prochlorococcus marinus (strain MIT 9303).